Reading from the N-terminus, the 467-residue chain is Hydroxyacid-oxoacid transhydrogenase, mitochondrial (467 aa).

At Lys-445 the chain carries N6-acetyllysine. Ser-452 carries the phosphoserine modification.

The protein belongs to the iron-containing alcohol dehydrogenase family. Hydroxyacid-oxoacid transhydrogenase subfamily. Expressed in kidney and liver.

Its subcellular location is the mitochondrion. The catalysed reaction is (S)-3-hydroxybutanoate + 2-oxoglutarate = (R)-2-hydroxyglutarate + acetoacetate. It carries out the reaction 4-hydroxybutanoate + 2-oxoglutarate = (R)-2-hydroxyglutarate + succinate semialdehyde. In terms of biological role, catalyzes the cofactor-independent reversible oxidation of gamma-hydroxybutyrate (GHB) to succinic semialdehyde (SSA) coupled to reduction of 2-ketoglutarate (2-KG) to D-2-hydroxyglutarate (D-2-HG). L-3-hydroxybutyrate (L-3-OHB) is also a substrate for HOT when using 2-KG as hydrogen acceptor, resulting in the formation of D-2-HG. This chain is Hydroxyacid-oxoacid transhydrogenase, mitochondrial (Adhfe1), found in Rattus norvegicus (Rat).